Reading from the N-terminus, the 39-residue chain is Bacteriocin E50-52 (39 aa).

The protein localises to the secreted. Its function is as follows. Bacteriocin active against the Gram-negative bacteria C.jejuni, Y.enterocolitica and Y.pseudotuberculosis, and the Gram-positive bacteria S.aureus, S.epidermidis, L.monocytogenes and Listeria spp. When added to the drinking water of chickens, causes a decrease in the levels of C.jejuni and S.enteritidis in the ceca, and in the levels of S.enteritidis in the liver and spleen. The protein is Bacteriocin E50-52 of Enterococcus faecium (Streptococcus faecium).